The chain runs to 231 residues: Probable calcium-binding protein CML21 (231 aa).

4 consecutive EF-hand domains span residues 54 to 89 (DGLR…LEIS), 90 to 125 (FDEE…VYLL), 145 to 180 (PTFE…SGER), and 181 to 216 (SSGR…WVGI). Residues aspartate 67, aspartate 69, asparagine 71, serine 73, and glutamate 78 each contribute to the Ca(2+) site. Ca(2+)-binding residues include aspartate 158, asparagine 160, aspartate 162, tyrosine 164, glutamate 169, aspartate 194, aspartate 196, asparagine 198, methionine 200, and glutamate 205.

Its function is as follows. Potential calcium sensor. This chain is Probable calcium-binding protein CML21 (CML21), found in Arabidopsis thaliana (Mouse-ear cress).